A 479-amino-acid chain; its full sequence is Cell division protein FtsA (479 aa).

The disordered stretch occupies residues 417-458; that stretch reads QGRQTERKENEQRDNTDRQREDTPKQTVKKKEKTGPSFGDKL. Basic and acidic residues predominate over residues 420-440; that stretch reads QTERKENEQRDNTDRQREDTP.

This sequence belongs to the FtsA/MreB family. In terms of assembly, self-interacts. Interacts with FtsZ.

The protein resides in the cell inner membrane. Its function is as follows. Cell division protein that is involved in the assembly of the Z ring. May serve as a membrane anchor for the Z ring. The protein is Cell division protein FtsA of Porphyromonas gingivalis (strain ATCC BAA-308 / W83).